The primary structure comprises 389 residues: Alpha carbonic anhydrase 8 (389 aa).

The first 22 residues, Met1–Ser22, serve as a signal peptide directing secretion. Residues Ser21–Trp153 form a disordered region. Over residues Ala25–Ala129 the composition is skewed to pro residues. Residues Thr138–Lys374 form the Alpha-carbonic anhydrase domain. Residues Cys163 and Cys324 are joined by a disulfide bond. N-linked (GlcNAc...) asparagine glycosylation occurs at Asn196. The Proton acceptor role is filled by His204. Residues His232, His234, and His251 each contribute to the Zn(2+) site. Thr320 to Ala321 serves as a coordination point for substrate. Asn385 carries N-linked (GlcNAc...) asparagine glycosylation.

This sequence belongs to the alpha-class carbonic anhydrase family. Requires Zn(2+) as cofactor. N-glycosylated.

The protein resides in the plastid. It localises to the chloroplast stroma. It catalyses the reaction hydrogencarbonate + H(+) = CO2 + H2O. Reversible hydration of carbon dioxide. This is Alpha carbonic anhydrase 8 (ACA8) from Arabidopsis thaliana (Mouse-ear cress).